The chain runs to 239 residues: Vesicle-associated protein 1-2 (239 aa).

An N-acetylmethionine modification is found at methionine 1. The Cytoplasmic segment spans residues methionine 1–glycine 215. N-acetylserine; in Vesicle-associated protein 1-2, N-terminally processed is present on serine 2. The MSP domain maps to leucine 5–valine 125. The segment at valine 123–serine 174 is disordered. Serine 132 carries the post-translational modification Phosphoserine. A compositionally biased stretch (polar residues) spans glutamate 140–aspartate 156. Serine 164 carries the phosphoserine modification. Residues aspartate 169–glycine 215 adopt a coiled-coil conformation. The chain crosses the membrane as a helical; Anchor for type IV membrane protein span at residues glycine 216–methionine 236.

This sequence belongs to the VAMP-associated protein (VAP) (TC 9.B.17) family. In terms of assembly, interacts with ORP3A. Binds to VLG at the endomembrane system.

It is found in the endoplasmic reticulum membrane. Its function is as follows. Vesicle-associated protein that binds the oxysterol-binding protein ORP3A and allows its targeting to the ER. This is Vesicle-associated protein 1-2 from Arabidopsis thaliana (Mouse-ear cress).